The following is a 583-amino-acid chain: Interactor of constitutive active ROPs 2, chloroplastic (583 aa).

The N-terminal 55 residues, 1–55 (MQTPKPRPGSLEVPQKKSPASTPKTARKLKTSESDPVSSPNTKIRTPKTQSPKVV), are a transit peptide targeting the chloroplast. Disordered stretches follow at residues 1–80 (MQTP…PELA) and 101–125 (EALK…NASE). Positions 34–52 (SDPVSSPNTKIRTPKTQSP) are enriched in polar residues. Coiled coils occupy residues 74 to 207 (GKTP…DAKE) and 238 to 516 (MKMS…AAAT). A compositionally biased stretch (basic and acidic residues) spans 102 to 115 (ALKKEAQDQAEETK). The tract at residues 518 to 583 (LSGGNNNNNS…IGVLLKKSQK (66 aa)) is disordered. The segment covering 519–529 (SGGNNNNNSNG) has biased composition (low complexity). Serine 540 bears the Phosphoserine mark.

This sequence belongs to the ICR family. Interacts with ARAC8, ARAC11 and KIN13A in vitro, but not with ICR1 or SEC3A.

The protein localises to the plastid. It is found in the chloroplast. Acts as a scaffold, mediating interaction of ROPs with different proteins. This Arabidopsis thaliana (Mouse-ear cress) protein is Interactor of constitutive active ROPs 2, chloroplastic (ICR2).